Reading from the N-terminus, the 257-residue chain is Acetylglutamate kinase (257 aa).

Substrate-binding positions include 43–44 (GG), Arg-65, and Asn-157. ATP is bound by residues 180 to 185 (DVSGIL) and 208 to 210 (IIT).

Belongs to the acetylglutamate kinase family. ArgB subfamily. Homodimer.

The protein localises to the cytoplasm. It carries out the reaction N-acetyl-L-glutamate + ATP = N-acetyl-L-glutamyl 5-phosphate + ADP. The protein operates within amino-acid biosynthesis; L-arginine biosynthesis; N(2)-acetyl-L-ornithine from L-glutamate: step 2/4. In terms of biological role, catalyzes the ATP-dependent phosphorylation of N-acetyl-L-glutamate. This is Acetylglutamate kinase from Salmonella schwarzengrund (strain CVM19633).